Here is a 718-residue protein sequence, read N- to C-terminus: MAFCALSFPAHISRATTPAPSDLQKSSSFSSRFYWGADLLRPSQYKVRKIQSGVYASLSESGEYHSRRPPTPLLDTINYPIHMKNLSVKELKQLSDELRSDVIFNVSNTGGHLGSSLGVVELTVALHFVFNTPQDRILWDVGHQSYPHKILTGRRDKMHTMRQTNGLAGFTKRSESEYDCFGTGHSSTTISAGLGMAVGRDLKGRKNNVVAVIGDGAMTAGQAYEAMNNAGYLDSDMIIILNDNKQVSLPTASLDGPIPPVGALSSALSRLQSNRPLRELREVAKGVTKQIGGSVHELAAKVDEYARGMISGSGSTLFEELGLYYIGPVDGHNIDDLVSILEEVKSTKTTGPVLIHCITEKGRGYPYAEKAADKYHGVAKFDPATGKQFKGTSNTQSYTTYFAEALVAEAEADKDVVAIHAAMGGGTGLNLFLRRFPTRCFDVGIAEQHAVTFAAGLACEGLKPFCAIYSSFMQRAYDQAIHDVDLQKLPVRFAMDRAGLVGADGPTHCGAFDVTFMACLPNMVVMAPSDEAELFHMVATAAAIDDRPSCFRYPRGNGIGVPLPQGNKGTPLEIGKGRVLVEGERVALLGYGTAVQSCLAAAALVEPHGLRLTVADARFCKPLDHALIRELAKNHEVLITVEEGSIGGFGSHVAQFMALDGLLDGKTKWRPIVLPDRYIDHGSPADQYVDAGLTPPHIAATVFNVLGQTREALKVMTT.

A chloroplast-targeting transit peptide spans 1–55 (MAFCALSFPAHISRATTPAPSDLQKSSSFSSRFYWGADLLRPSQYKVRKIQSGVY). Residues histidine 143 and 184–186 (GHS) each bind thiamine diphosphate. Position 215 (aspartate 215) interacts with Mg(2+). Thiamine diphosphate is bound by residues 216 to 217 (GA), asparagine 244, tyrosine 365, and glutamate 447. Asparagine 244 contacts Mg(2+).

The protein belongs to the transketolase family. DXPS subfamily. Homodimer. The cofactor is Mg(2+). It depends on thiamine diphosphate as a cofactor. As to expression, expressed in trichomes, leaves, flowers, roots and stems.

It localises to the plastid. The protein localises to the chloroplast. It carries out the reaction D-glyceraldehyde 3-phosphate + pyruvate + H(+) = 1-deoxy-D-xylulose 5-phosphate + CO2. The protein operates within metabolic intermediate biosynthesis; 1-deoxy-D-xylulose 5-phosphate biosynthesis; 1-deoxy-D-xylulose 5-phosphate from D-glyceraldehyde 3-phosphate and pyruvate: step 1/1. In terms of biological role, catalyzes the acyloin condensation reaction between C atoms 2 and 3 of pyruvate and glyceraldehyde 3-phosphate to yield 1-deoxy-D-xylulose-5-phosphate (DXP). This chain is 1-deoxy-D-xylulose-5-phosphate synthase 1, chloroplastic, found in Cannabis sativa (Hemp).